Consider the following 394-residue polypeptide: 4-hydroxybenzoate 3-monooxygenase (NAD(P)H) (394 aa).

FAD contacts are provided by residues Glu32, 42-47 (TIRAGV), and Gln102. Substrate-binding positions include Tyr203, 214–216 (STR), and Tyr224. Asp288 serves as a coordination point for FAD. Pro295 lines the substrate pocket. Residue 301–302 (LN) participates in FAD binding.

Belongs to the aromatic-ring hydroxylase family. FAD is required as a cofactor.

The catalysed reaction is 4-hydroxybenzoate + NADH + O2 + H(+) = 3,4-dihydroxybenzoate + NAD(+) + H2O. It carries out the reaction 4-hydroxybenzoate + NADPH + O2 + H(+) = 3,4-dihydroxybenzoate + NADP(+) + H2O. Its function is as follows. Involved in the degradation of 4-hydroxybenzoate (4HB) via the protocatechuate (PCA) 2,3-cleavage pathway. Catalyzes the conversion of 4HB into 2-hydroxypenta-2,4-dienoate (HPD). It is highly specific for 4-hydroxybenzoate, and is able to utilize both NADH and NADPH as electron donors at approximately equal rates. This chain is 4-hydroxybenzoate 3-monooxygenase (NAD(P)H) (praI), found in Paenibacillus sp.